The following is a 522-amino-acid chain: F-box-like/WD repeat-containing protein TBL1Y (522 aa).

At S2 the chain carries N-acetylserine. Residues 4-36 enclose the LisH domain; sequence TSDEVNFLVYRYLQESGFSHSAFTFGIESHISQ. The region spanning 41 to 86 is the F-box-like domain; it reads GTLVPPSALISILQKGLQYVEAEISINKDGTVFDSRPIESLSLIVA. The residue at position 102 (K102) is an N6-acetyllysine. S130 bears the Phosphoserine mark. WD repeat units follow at residues 177–216, 233–272, 274–313, 316–354, 357–396, 399–447, 450–489, and 491–521; these read GHES…NGGS, PSNK…ASTL, QHKG…AKQQ, FHSA…PVKT, GHTN…CVHD, AHSK…CTHT, KHQE…LVHS, and QGTG…CVLD. Residue K287 forms a Glycyl lysine isopeptide (Lys-Gly) (interchain with G-Cter in SUMO2) linkage.

Belongs to the WD repeat EBI family. As to quaternary structure, probable component of the N-Cor repressor complex and some E3 ubiquitin ligase complex. Interacts with NCOR2. Fetal brain and prostate. Expressed in the cochlear spiral ganglion neurons, and in outer and inner hair cells.

The protein localises to the nucleus. In terms of biological role, F-box-like protein involved in the recruitment of the ubiquitin/19S proteasome complex to nuclear receptor-regulated transcription units. Plays an essential role in transcription activation mediated by nuclear receptors. Probably acts as integral component of corepressor complexes that mediates the recruitment of the 19S proteasome complex, leading to the subsequent proteasomal degradation of transcription repressor complexes, thereby allowing cofactor exchange. This chain is F-box-like/WD repeat-containing protein TBL1Y (TBL1Y), found in Homo sapiens (Human).